We begin with the raw amino-acid sequence, 504 residues long: Maturase K (504 aa).

This sequence belongs to the intron maturase 2 family. MatK subfamily.

The protein resides in the plastid. It localises to the chloroplast. Functionally, usually encoded in the trnK tRNA gene intron. Probably assists in splicing its own and other chloroplast group II introns. The chain is Maturase K from Hamamelis virginiana (Witch-hazel).